A 79-amino-acid chain; its full sequence is RNA-binding protein Hfq (79 aa).

In terms of domain architecture, Sm spans 10-69; the sequence is DPFLNALRKEHVPVSIYLVNGIKLQGNIESFDQYVVLLRNTVTQMVYKHAISTVVPARAV.

Belongs to the Hfq family. In terms of assembly, homohexamer.

Its function is as follows. RNA chaperone that binds small regulatory RNA (sRNAs) and mRNAs to facilitate mRNA translational regulation in response to envelope stress, environmental stress and changes in metabolite concentrations. Also binds with high specificity to tRNAs. The protein is RNA-binding protein Hfq of Ralstonia nicotianae (strain ATCC BAA-1114 / GMI1000) (Ralstonia solanacearum).